The following is a 43-amino-acid chain: Protein PsbN (43 aa).

The chain crosses the membrane as a helical span at residues 5–27 (TFITIFISCLLVSVTGYALYTAF).

It belongs to the PsbN family.

The protein resides in the plastid. It is found in the chloroplast thylakoid membrane. In terms of biological role, may play a role in photosystem I and II biogenesis. The chain is Protein PsbN from Chara vulgaris (Common stonewort).